Consider the following 153-residue polypeptide: uncharacterized protein (153 aa).

It belongs to the RusA family.

This is an uncharacterized protein from Xylella fastidiosa (strain Temecula1 / ATCC 700964).